The following is a 154-amino-acid chain: Transcriptional repressor NrdR (154 aa).

Residues 3–34 fold into a zinc finger; it reads CPYCRHPDSRVVDSREADDGQLIRRRRSCPEC. The ATP-cone domain occupies 46–136; that stretch reads LAVVKRSGVT…VYRSFESLAD (91 aa).

It belongs to the NrdR family. Zn(2+) serves as cofactor.

In terms of biological role, negatively regulates transcription of bacterial ribonucleotide reductase nrd genes and operons by binding to NrdR-boxes. The polypeptide is Transcriptional repressor NrdR (Salinispora arenicola (strain CNS-205)).